We begin with the raw amino-acid sequence, 1227 residues long: Methionine synthase (1227 aa).

Residues 2 to 325 enclose the Hcy-binding domain; sequence SSKVEQLRAQ…EHIAAMSRAV (324 aa). Residues Cys247, Cys310, and Cys311 each coordinate Zn(2+). In terms of domain architecture, Pterin-binding spans 356–617; that stretch reads FVNVGERTNV…LPAELRDAVE (262 aa). The region spanning 650–744 is the B12-binding N-terminal domain; the sequence is QQAEWRSWDV…FIEASKEKGS (95 aa). Residues Glu694, 756–760, His759, Ser804, Thr808, and Ala860 each bind methylcob(III)alamin; that span reads GDVHD. The 136-residue stretch at 746–881 folds into the B12-binding domain; sequence NGKMVIATVK…SDTQRDDFVA (136 aa). The AdoMet activation domain maps to 897–1227; it reads KKPRTPPVTL…LAPNLGYDAD (331 aa). S-adenosyl-L-methionine is bound by residues Asp946, Arg1134, and 1189–1190; that span reads YF.

Belongs to the vitamin-B12 dependent methionine synthase family. Methylcob(III)alamin serves as cofactor. It depends on Zn(2+) as a cofactor.

It catalyses the reaction (6S)-5-methyl-5,6,7,8-tetrahydrofolate + L-homocysteine = (6S)-5,6,7,8-tetrahydrofolate + L-methionine. Its pathway is amino-acid biosynthesis; L-methionine biosynthesis via de novo pathway; L-methionine from L-homocysteine (MetH route): step 1/1. Catalyzes the transfer of a methyl group from methyl-cobalamin to homocysteine, yielding enzyme-bound cob(I)alamin and methionine. Subsequently, remethylates the cofactor using methyltetrahydrofolate. The protein is Methionine synthase (metH) of Salmonella typhimurium (strain LT2 / SGSC1412 / ATCC 700720).